A 351-amino-acid chain; its full sequence is GDSL esterase/lipase At4g26790 (351 aa).

The first 25 residues, 1–25 (MQRNRVLAFLLLAAQLLVKIPETCA), serve as a signal peptide directing secretion. Residue S36 is the Nucleophile of the active site. N-linked (GlcNAc...) asparagine glycosylation occurs at N118. Residues D326 and H329 contribute to the active site.

This sequence belongs to the 'GDSL' lipolytic enzyme family.

It is found in the secreted. The sequence is that of GDSL esterase/lipase At4g26790 from Arabidopsis thaliana (Mouse-ear cress).